The sequence spans 340 residues: Lipoyl synthase (340 aa).

Residues Cys83, Cys88, Cys94, Cys109, Cys113, Cys116, and Ser323 each contribute to the [4Fe-4S] cluster site. Residues 95-312 (FSGGTATFMI…AEEGYKMGFK (218 aa)) form the Radical SAM core domain.

The protein belongs to the radical SAM superfamily. Lipoyl synthase family. It depends on [4Fe-4S] cluster as a cofactor.

Its subcellular location is the cytoplasm. The catalysed reaction is [[Fe-S] cluster scaffold protein carrying a second [4Fe-4S](2+) cluster] + N(6)-octanoyl-L-lysyl-[protein] + 2 oxidized [2Fe-2S]-[ferredoxin] + 2 S-adenosyl-L-methionine + 4 H(+) = [[Fe-S] cluster scaffold protein] + N(6)-[(R)-dihydrolipoyl]-L-lysyl-[protein] + 4 Fe(3+) + 2 hydrogen sulfide + 2 5'-deoxyadenosine + 2 L-methionine + 2 reduced [2Fe-2S]-[ferredoxin]. Its pathway is protein modification; protein lipoylation via endogenous pathway; protein N(6)-(lipoyl)lysine from octanoyl-[acyl-carrier-protein]: step 2/2. Its function is as follows. Catalyzes the radical-mediated insertion of two sulfur atoms into the C-6 and C-8 positions of the octanoyl moiety bound to the lipoyl domains of lipoate-dependent enzymes, thereby converting the octanoylated domains into lipoylated derivatives. This Pseudomonas fluorescens (strain Pf0-1) protein is Lipoyl synthase.